The chain runs to 68 residues: Protein SlyX homolog (68 aa).

Belongs to the SlyX family.

This Pseudomonas entomophila (strain L48) protein is Protein SlyX homolog.